The sequence spans 326 residues: MELDAIINQAQSQIDAAQDAATLDQVRVEFMGKKGKLTDLLKGLGKLSNEERPAAGQKINQAKQVIQQAISAKGEFLRTEELNKKLAEEAVDVTLPGRTEKPGNLHPVSRTIARIESFFGELGFSVKTGPEIEDGFHNFDALNIPANHPARADHDTFYFNPDMMLRTQTSGVQIRTMEAEKPPLRIISPGRVYRNDYDQTHTPMFHQVEGLMVDKNVSFTDLKGILHDFLHHFFEESLEIRFRPSYFPFTEPSAEVDVMGKNGQWLEVLGCGMVHPNVLKAVGIDPEEYTGFAFGMGVERLTMLRYGVNDLRAFFENDLRFLKQFN.

Glu-251 serves as a coordination point for Mg(2+).

This sequence belongs to the class-II aminoacyl-tRNA synthetase family. Phe-tRNA synthetase alpha subunit type 1 subfamily. In terms of assembly, tetramer of two alpha and two beta subunits. Mg(2+) serves as cofactor.

The protein localises to the cytoplasm. It carries out the reaction tRNA(Phe) + L-phenylalanine + ATP = L-phenylalanyl-tRNA(Phe) + AMP + diphosphate + H(+). This chain is Phenylalanine--tRNA ligase alpha subunit, found in Alteromonas mediterranea (strain DSM 17117 / CIP 110805 / LMG 28347 / Deep ecotype).